The following is a 418-amino-acid chain: Ig-like V-type domain-containing protein FAM187A (418 aa).

The signal sequence occupies residues 1–18 (MRLAPTTVLLWAWGSLQA). Over 19-376 (FEIVEKENIF…ASLSDPETRT (358 aa)) the chain is Extracellular. An Ig-like V-type domain is found at 267 to 361 (PWVPQVPIQF…IAGFRLGVTS (95 aa)). The cysteines at positions 289 and 345 are disulfide-linked. Residue Asn317 is glycosylated (N-linked (GlcNAc...) asparagine). Residues 377-397 (AVELTLIGYLLIAVVFVTIHL) traverse the membrane as a helical segment. Topologically, residues 398–418 (CRCCCQSRCCPNFSAQTLLQL) are cytoplasmic.

It belongs to the FAM187 family.

The protein resides in the membrane. The protein is Ig-like V-type domain-containing protein FAM187A (Fam187a) of Rattus norvegicus (Rat).